Consider the following 1066-residue polypeptide: Ubiquitin conjugation factor E4 A (1066 aa).

Residues 35-57 are disordered; it reads QLKQQSDELPASPDDSDNSVSES. Lys386 is modified (N6-acetyllysine). A U-box domain is found at 987 to 1061; that stretch reads DACDEFLDPI…QRWLAERKQQ (75 aa).

The protein belongs to the ubiquitin conjugation factor E4 family.

It is found in the cytoplasm. The catalysed reaction is S-ubiquitinyl-[E2 ubiquitin-conjugating enzyme]-L-cysteine + [acceptor protein]-L-lysine = [E2 ubiquitin-conjugating enzyme]-L-cysteine + N(6)-ubiquitinyl-[acceptor protein]-L-lysine.. It participates in protein modification; protein ubiquitination. In terms of biological role, ubiquitin-protein ligase that probably functions as an E3 ligase in conjunction with specific E1 and E2 ligases. May also function as an E4 ligase mediating the assembly of polyubiquitin chains on substrates ubiquitinated by another E3 ubiquitin ligase. Mediates 'Lys-48'-linked polyubiquitination of substrates. The protein is Ubiquitin conjugation factor E4 A of Rattus norvegicus (Rat).